The primary structure comprises 260 residues: MVKFYDREFGSRLLIGSALYPSPAIMQDSIRESGAEIVTVSLRRETAGGKAGDQFWSLIRELGVTVLPNTAGCRGVRDAVTTAKLARELFATSWIKLEVIADNDTLQPDVVGLVEAAQILIKDGFEVFPYCTEDLSVAMRLVDAGCRVVMPWAAPIGSARGITNRDALKLLRDRLPDITLVVDAGLGAPSHAAEAMELGYDAVLLNTAIAKAEDPVAMARGFKLAIEAGRTGFEAGLMGARDFASPSTPVIGTPFWHAVS.

The Schiff-base intermediate with DXP role is filled by Lys-96. 1-deoxy-D-xylulose 5-phosphate contacts are provided by residues Gly-157, 184-185 (AG), and 206-207 (NT).

The protein belongs to the ThiG family. As to quaternary structure, homotetramer. Forms heterodimers with either ThiH or ThiS.

The protein resides in the cytoplasm. The catalysed reaction is [ThiS sulfur-carrier protein]-C-terminal-Gly-aminoethanethioate + 2-iminoacetate + 1-deoxy-D-xylulose 5-phosphate = [ThiS sulfur-carrier protein]-C-terminal Gly-Gly + 2-[(2R,5Z)-2-carboxy-4-methylthiazol-5(2H)-ylidene]ethyl phosphate + 2 H2O + H(+). It functions in the pathway cofactor biosynthesis; thiamine diphosphate biosynthesis. Functionally, catalyzes the rearrangement of 1-deoxy-D-xylulose 5-phosphate (DXP) to produce the thiazole phosphate moiety of thiamine. Sulfur is provided by the thiocarboxylate moiety of the carrier protein ThiS. In vitro, sulfur can be provided by H(2)S. This is Thiazole synthase from Rhodopseudomonas palustris (strain ATCC BAA-98 / CGA009).